Here is a 382-residue protein sequence, read N- to C-terminus: Succinate--CoA ligase [ADP-forming] subunit beta (382 aa).

Residues 9–237 (KQVFADAGIP…AAEGDELEQK (229 aa)) enclose the ATP-grasp domain. Residues Lys45, 52-54 (GRG), Glu91, Val94, and Glu99 contribute to the ATP site. Residues Asn191 and Asp205 each contribute to the Mg(2+) site. Substrate is bound by residues Asn257 and 314 to 316 (GIT).

Belongs to the succinate/malate CoA ligase beta subunit family. As to quaternary structure, heterotetramer of two alpha and two beta subunits. It depends on Mg(2+) as a cofactor.

The enzyme catalyses succinate + ATP + CoA = succinyl-CoA + ADP + phosphate. It carries out the reaction GTP + succinate + CoA = succinyl-CoA + GDP + phosphate. It functions in the pathway carbohydrate metabolism; tricarboxylic acid cycle; succinate from succinyl-CoA (ligase route): step 1/1. Functionally, succinyl-CoA synthetase functions in the citric acid cycle (TCA), coupling the hydrolysis of succinyl-CoA to the synthesis of either ATP or GTP and thus represents the only step of substrate-level phosphorylation in the TCA. The beta subunit provides nucleotide specificity of the enzyme and binds the substrate succinate, while the binding sites for coenzyme A and phosphate are found in the alpha subunit. The chain is Succinate--CoA ligase [ADP-forming] subunit beta from Haloarcula marismortui (strain ATCC 43049 / DSM 3752 / JCM 8966 / VKM B-1809) (Halobacterium marismortui).